The sequence spans 1409 residues: DNA-directed RNA polymerase subunit beta' (1409 aa).

Residues Cys70, Cys72, Cys85, and Cys88 each contribute to the Zn(2+) site. Residues Asp458, Asp460, and Asp462 each coordinate Mg(2+). Zn(2+) contacts are provided by Cys813, Cys887, Cys894, and Cys897.

This sequence belongs to the RNA polymerase beta' chain family. In terms of assembly, the RNAP catalytic core consists of 2 alpha, 1 beta, 1 beta' and 1 omega subunit. When a sigma factor is associated with the core the holoenzyme is formed, which can initiate transcription. Mg(2+) is required as a cofactor. Zn(2+) serves as cofactor.

The enzyme catalyses RNA(n) + a ribonucleoside 5'-triphosphate = RNA(n+1) + diphosphate. Functionally, DNA-dependent RNA polymerase catalyzes the transcription of DNA into RNA using the four ribonucleoside triphosphates as substrates. The protein is DNA-directed RNA polymerase subunit beta' of Delftia acidovorans (strain DSM 14801 / SPH-1).